Consider the following 374-residue polypeptide: MDLLGAAKPQWPWRRCLAGLLFQLLVAVCFFSYLRVSRDDATGSPRPRLMAVEPVTGAPNGSRCQDSMAAPARPTLLILLWTWPFNTPVALPRCSEMVPGAADCNITADSNVYPQADAVIVHHWDIMRTPSANLPPPTRPQGQRWIWFSMESPSNCRHLEALDGYFNLTMSYRSDSDIFTPYGWLEPWSGQPAHPPLNLSAKTELVAWAVSNWEPGSARVRYYQSLQAHLKVDVYGRSHKPLPQGTMMETLSRYKFYLAFENSLHPDYITEKLWRNALEAWAVPVVLAPSRSNYERFLPPDAFIHVDDFQSPKDLARYLQELDKDHARYLSYFRWRETLRPRSFSWALDFCKACWKLQQESRYQTVRSIAAWFN.

Residues 1 to 15 (MDLLGAAKPQWPWRR) are Cytoplasmic-facing. A helical; Signal-anchor for type II membrane protein transmembrane segment spans residues 16-34 (CLAGLLFQLLVAVCFFSYL). The Lumenal portion of the chain corresponds to 35 to 374 (RVSRDDATGS…TVRSIAAWFN (340 aa)). 4 N-linked (GlcNAc...) asparagine glycosylation sites follow: Asn-60, Asn-105, Asn-167, and Asn-198.

The protein belongs to the glycosyltransferase 10 family.

It localises to the golgi apparatus. The protein localises to the golgi stack membrane. It carries out the reaction a beta-D-galactosyl-(1-&gt;3)-N-acetyl-beta-D-glucosaminyl derivative + GDP-beta-L-fucose = a beta-D-galactosyl-(1-&gt;3)-[alpha-L-fucosyl-(1-&gt;4)]-N-acetyl-beta-D-glucosaminyl derivative + GDP + H(+). It catalyses the reaction an N-acetyl-alpha-neuraminyl-(2-&gt;3)-beta-D-galactosyl-(1-&gt;4)-N-acetyl-beta-D-glucosaminyl derivative + GDP-beta-L-fucose = an alpha-Neu5Ac-(2-&gt;3)-beta-D-Gal-(1-&gt;4)-[alpha-L-Fuc-(1-&gt;3)]-beta-D-GlcNAc derivative + GDP + H(+). The enzyme catalyses an alpha-Neu5Ac-(2-&gt;3)-beta-D-Gal-(1-&gt;4)-beta-D-GlcNAc-(1-&gt;3)-beta-D-Gal-(1-&gt;4)-[alpha-L-Fuc-(1-&gt;3)]-beta-D-GlcNAc derivative + GDP-beta-L-fucose = an alpha-Neu5Ac-(2-&gt;3)-beta-D-Gal-(1-&gt;4)-[alpha-L-Fuc-(1-&gt;3)]-beta-D-GlcNAc-(1-&gt;3)-beta-D-Gal-(1-&gt;4)-[alpha-L-Fuc-(1-&gt;3)]-beta-D-GlcNAc derivative + GDP + H(+). The catalysed reaction is a beta-D-galactosyl-(1-&gt;4)-N-acetyl-beta-D-glucosaminyl derivative + GDP-beta-L-fucose = a beta-D-galactosyl-(1-&gt;4)-[alpha-L-fucosyl-(1-&gt;3)]-N-acetyl-beta-D-glucosaminyl derivative + GDP + H(+). It carries out the reaction a neolactoside nLc4Cer + GDP-beta-L-fucose = a neolactoside III(3)-alpha-Fuc-nLc4Cer + GDP + H(+). It catalyses the reaction a neolactoside nLc6Cer + GDP-beta-L-fucose = beta-D-galactosyl-(1-&gt;4)-N-acetyl-beta-D-glucosaminyl-(1-&gt;3)-beta-D-galactosyl-(1-&gt;4)-[alpha-L-fucosyl-(1-&gt;3)]-N-acetyl-beta-D-glucosaminyl-(1-&gt;3)-beta-D-galactosyl-(1-&gt;4)-beta-D-glucosyl-(1&lt;-&gt;1')-ceramide + GDP + H(+). The enzyme catalyses a neolactoside nLc6Cer(d18:1(4E)) + GDP-beta-L-fucose = a neolactoside III(3)-alpha-Fuc-nLc6Cer(d18:1(4E)) + GDP + H(+). The catalysed reaction is a neolactoside nLc4Cer(d18:1(4E)) + GDP-beta-L-fucose = a neolactoside III(3)-alpha-Fuc-nLc4Cer(d18:1(4E)) + GDP + H(+). It carries out the reaction a neolactoside VI(3)-alpha-NeuNAc-nLc6Cer + GDP-beta-L-fucose = a neolactoside VI(3)-alpha-NeuAc,III(3)-alphaFuc-nLc6Cer + GDP + H(+). It catalyses the reaction beta-D-galactosyl-(1-&gt;4)-N-acetyl-D-glucosamine + GDP-beta-L-fucose = beta-D-galactosyl-(1-&gt;4)-[alpha-L-fucosyl-(1-&gt;3)]-N-acetyl-D-glucosamine + GDP + H(+). The enzyme catalyses N-acetyl-alpha-neuraminosyl-(2-&gt;3)-beta-D-galactosyl-(1-&gt;4)-N-acetyl-beta-D-glucosamine + GDP-beta-L-fucose = N-acetyl-alpha-neuraminosyl-(2-&gt;3)-beta-D-galactosyl-(1-&gt;4)-[alpha-L-fucosyl-(1-&gt;3)]-N-acetyl-beta-D-glucosamine + GDP + H(+). The catalysed reaction is alpha-L-Fuc-(1-&gt;2)-beta-D-Gal-(1-&gt;4)-D-GlcNAc + GDP-beta-L-fucose = alpha-L-Fuc-(1-&gt;2)-beta-D-Gal-(1-&gt;4)-[alpha-L-Fuc-(1-&gt;3)]-D-GlcNAc + GDP + H(+). It carries out the reaction an alpha-Neu5Ac-(2-&gt;3)-beta-D-Gal-(1-&gt;3)-D-GlcNAc derivative + GDP-beta-L-fucose = an alpha-Neu5Ac-(2-&gt;3)-beta-D-Gal-(1-&gt;3)-[alpha-L-Fuc-(1-&gt;4)]-beta-D-GlcNAc derivative + GDP + H(+). It functions in the pathway protein modification; protein glycosylation. In terms of biological role, catalyzes preferentially the transfer of L-fucose, from a guanosine diphosphate-beta-L-fucose, to the N-acetyl-beta-D-glucosamine (GlcNAc) of an N-acetyllactosamine unit (type 2 chain) of an oligosaccharide, or a glycoprotein- and a glycolipid-linked N-acetyllactosamine unit via an alpha (1,3) linkage and participates in the surface expression of VIM-2, Lewis X/SSEA-1 and sialyl Lewis X antigens. Preferentially transfers fucose to the GlcNAc of an internal N-acetyllactosamine unit of a poly-N-acetyllactosamine chain acceptor substrate. Also catalyzes to a lesser extend the transfer of L-fucose to the GlcNAc of a type 1 (beta-D-galactosyl-(1-&gt;3)-N-acetyl-beta-D-glucosaminyl) or H-type 1 (alpha-L-Fuc-(1-&gt;2)-beta-D-Gal-(1-&gt;3)-D-GlcNAc) chain oligosaccharide via an alpha (1,4) linkage. Preferentially catalyzes sialylated type 2 oligosaccharide acceptors over neutral type 2 or H type 2 (alpha-L-Fuc-(1-&gt;2)-beta-D-Gal-(1-&gt;4)-D-GlcNAc) oligosaccharide acceptors. Lactose-based structures are also acceptor substrates. The protein is 4-galactosyl-N-acetylglucosaminide 3-alpha-L-fucosyltransferase FUT5 of Hylobates lar (Lar gibbon).